Consider the following 551-residue polypeptide: Hydroxylamine reductase (551 aa).

[2Fe-2S] cluster contacts are provided by Cys3, Cys6, Cys18, and Cys25. 8 residues coordinate hybrid [4Fe-2O-2S] cluster: His249, Glu273, Cys317, Cys405, Cys433, Cys459, Glu493, and Lys495. At Cys405 the chain carries Cysteine persulfide.

It belongs to the HCP family. The cofactor is [2Fe-2S] cluster. Requires hybrid [4Fe-2O-2S] cluster as cofactor.

The protein resides in the cytoplasm. It carries out the reaction A + NH4(+) + H2O = hydroxylamine + AH2 + H(+). Catalyzes the reduction of hydroxylamine to form NH(3) and H(2)O. The protein is Hydroxylamine reductase of Actinobacillus pleuropneumoniae serotype 5b (strain L20).